A 612-amino-acid polypeptide reads, in one-letter code: U-box domain-containing protein 11 (612 aa).

The stretch at 127-196 (DEVGEQVELA…LHFGEEEEKQ (70 aa)) forms a coiled coil. Residues 240-314 (TIPVDFLCPV…SRWCAEHNIE (75 aa)) enclose the U-box domain. ARM repeat units follow at residues 363-402 (TDNRILIAEAGAIPVLVNLLTSEDVATQENAITCVLNLSI), 404-443 (ENNKELIMFAGAVTSIVQVLRAGTMEARENAAATLFSLSL), 445-484 (DENKIIIGGSGAIPALVDLLENGTPRGKKDAATALFNLCI), 486-526 (HGNK…VLAN), and 528-567 (QDAKSAIVKANTLPALIGILQTDQTRNRENAAAILLSLCK).

The catalysed reaction is S-ubiquitinyl-[E2 ubiquitin-conjugating enzyme]-L-cysteine + [acceptor protein]-L-lysine = [E2 ubiquitin-conjugating enzyme]-L-cysteine + N(6)-ubiquitinyl-[acceptor protein]-L-lysine.. It functions in the pathway protein modification; protein ubiquitination. Functions as an E3 ubiquitin ligase. In Arabidopsis thaliana (Mouse-ear cress), this protein is U-box domain-containing protein 11 (PUB11).